The primary structure comprises 295 residues: 4-diphosphocytidyl-2-C-methyl-D-erythritol kinase (295 aa).

Lysine 15 is a catalytic residue. 101–111 contacts ATP; that stretch reads PIAAGLGGGSS. The active site involves aspartate 143.

The protein belongs to the GHMP kinase family. IspE subfamily.

The enzyme catalyses 4-CDP-2-C-methyl-D-erythritol + ATP = 4-CDP-2-C-methyl-D-erythritol 2-phosphate + ADP + H(+). Its pathway is isoprenoid biosynthesis; isopentenyl diphosphate biosynthesis via DXP pathway; isopentenyl diphosphate from 1-deoxy-D-xylulose 5-phosphate: step 3/6. In terms of biological role, catalyzes the phosphorylation of the position 2 hydroxy group of 4-diphosphocytidyl-2C-methyl-D-erythritol. This Caulobacter vibrioides (strain ATCC 19089 / CIP 103742 / CB 15) (Caulobacter crescentus) protein is 4-diphosphocytidyl-2-C-methyl-D-erythritol kinase.